Here is a 134-residue protein sequence, read N- to C-terminus: Small ribosomal subunit protein uS9 (134 aa).

The interval Asp109–Arg134 is disordered. Residues Pro118–Arg134 are compositionally biased toward basic residues.

Belongs to the universal ribosomal protein uS9 family.

The sequence is that of Small ribosomal subunit protein uS9 from Methanococcus maripaludis (strain C7 / ATCC BAA-1331).